The following is a 595-amino-acid chain: Chaperone protein HscA homolog (595 aa).

It belongs to the heat shock protein 70 family.

Chaperone involved in the maturation of iron-sulfur cluster-containing proteins. Has a low intrinsic ATPase activity which is markedly stimulated by HscB. This is Chaperone protein HscA homolog from Rickettsia conorii (strain ATCC VR-613 / Malish 7).